The chain runs to 432 residues: MTNAFNTNLSQAVFNAAQDLMPGGVSSPVRAFKSVNGDPIVFDRVKGPYAWDLDGNRFIDYVGSWGPAICGHSHPEVIAALQEALEKGTSFGAPCELENKLAGMVIEAVPSVEMVRFVNSGTEACMAVLRLMRAFTGRDKLIKFEGCYHGHADMFLVKAGSGVATLGLPDSPGVPRSTTSNTLTAPYNDLEAVKALFAENPDAISGVILEPIVGNAGFIPPEPGFLEGLRELTKENGSLLVFDEVMTGFRISYGGAQERFGVTPDLTTMGKVIGGGLPVGAYGGRKEIMSMVAPAGPMYQAGTLSGNPLAMTAGIKTLELLKQEGTYERLESLSQRLINGICESAKKAGIPITGSFISGMFGFYLCEGPVRNFQEAKQTNAELFGKLHRAMLEKGIYLAPSAFEAGFTSLAHSNDDIETTIKAFEASFSEIV.

Position 271 is an N6-(pyridoxal phosphate)lysine (Lys-271).

Belongs to the class-III pyridoxal-phosphate-dependent aminotransferase family. HemL subfamily. As to quaternary structure, homodimer. Pyridoxal 5'-phosphate serves as cofactor.

It is found in the cytoplasm. It carries out the reaction (S)-4-amino-5-oxopentanoate = 5-aminolevulinate. It participates in porphyrin-containing compound metabolism; protoporphyrin-IX biosynthesis; 5-aminolevulinate from L-glutamyl-tRNA(Glu): step 2/2. Its pathway is porphyrin-containing compound metabolism; chlorophyll biosynthesis. The polypeptide is Glutamate-1-semialdehyde 2,1-aminomutase (Prochlorococcus marinus (strain MIT 9211)).